A 176-amino-acid polypeptide reads, in one-letter code: MIQTLVLRDTPRLESCRRGGFAMKFSTRCLRLVLCASAVALSAQDASDTAGRVLEPPPPGLTESNSSRMYYVNLPVVKVFSHRLGYRVIYRRANFEMAEIYLPSAWFSPRVGKALLRHAPVRVDPYLSFFMEGNTLTYVKLTLPRSLSSPVWGTLKSPSEYDDKFDVQFQSPEFSS.

This is an uncharacterized protein from Treponema pallidum (strain Nichols).